A 604-amino-acid chain; its full sequence is Protein glass (604 aa).

Disordered regions lie at residues 111–139, 199–237, 359–400, and 414–434; these read ISTT…HGYW, NSHN…GGNN, LPPL…SPTS, and EDEE…GGEM. 2 stretches are compositionally biased toward low complexity: residues 117–126 and 200–237; these read ASSGNGSSNN and SHNH…GGNN. Residues 414 to 427 are compositionally biased toward acidic residues; it reads EDEEDSNEDLDGDE. 5 C2H2-type zinc fingers span residues 437–459, 465–487, 493–515, 521–543, and 549–571; these read NLCR…LRTH, YRCP…VRTH, FRCP…MRTH, YRCS…LRIH, and YQCK…MRVH. The interval 566–604 is disordered; it reads RHMRVHGNNNSSNGSNGATGVGGESSTGSGVGGGNSLLT. Positions 572–581 are enriched in low complexity; that stretch reads GNNNSSNGSN. Residues 582–604 show a composition bias toward gly residues; that stretch reads GATGVGGESSTGSGVGGGNSLLT.

The protein resides in the nucleus. Transcription factor required for gene expression specific to photoreceptor cells. This is Protein glass (gl) from Drosophila melanogaster (Fruit fly).